Here is an 89-residue protein sequence, read N- to C-terminus: Small ribosomal subunit protein uS15 (89 aa).

The protein belongs to the universal ribosomal protein uS15 family. As to quaternary structure, part of the 30S ribosomal subunit. Forms a bridge to the 50S subunit in the 70S ribosome, contacting the 23S rRNA.

In terms of biological role, one of the primary rRNA binding proteins, it binds directly to 16S rRNA where it helps nucleate assembly of the platform of the 30S subunit by binding and bridging several RNA helices of the 16S rRNA. Forms an intersubunit bridge (bridge B4) with the 23S rRNA of the 50S subunit in the ribosome. This Exiguobacterium sibiricum (strain DSM 17290 / CCUG 55495 / CIP 109462 / JCM 13490 / 255-15) protein is Small ribosomal subunit protein uS15.